The primary structure comprises 281 residues: Arabinose operon regulatory protein (281 aa).

Residues proline 8, threonine 24, arginine 38, tyrosine 82, and histidine 93 each coordinate alpha-L-arabinopyanose. The 100-residue stretch at 180 to 279 (RDACQYISDH…GASPSEFRAG (100 aa)) folds into the HTH araC/xylS-type domain. DNA-binding regions (H-T-H motif) lie at residues 198-219 (ASVA…RQQL) and 246-269 (IATV…KKCT).

As to quaternary structure, homodimer.

Its subcellular location is the cytoplasm. Transcription factor that regulates the expression of several genes involved in the transport and metabolism of L-arabinose. The protein is Arabinose operon regulatory protein of Salmonella typhimurium (strain LT2 / SGSC1412 / ATCC 700720).